Reading from the N-terminus, the 442-residue chain is Methionine aminopeptidase 2-1 (442 aa).

A disordered region spans residues 1-92 (MAAQASEELE…ISELFPNNQY (92 aa)). Positions 15-25 (NGQNGHAQEQV) are enriched in polar residues. Residues 30–47 (EAADNDDSEDDEKEEEGG) show a composition bias toward acidic residues. A compositionally biased stretch (basic residues) spans 56–72 (AKKKKKRKPKKKKKGGA). H195 contributes to the substrate binding site. The a divalent metal cation site is built by D215, D226, and H295. H303 contributes to the substrate binding site. Residues E328 and E423 each contribute to the a divalent metal cation site.

Belongs to the peptidase M24A family. Methionine aminopeptidase eukaryotic type 2 subfamily. Requires Co(2+) as cofactor. It depends on Zn(2+) as a cofactor. Mn(2+) serves as cofactor. Fe(2+) is required as a cofactor.

The protein resides in the cytoplasm. It catalyses the reaction Release of N-terminal amino acids, preferentially methionine, from peptides and arylamides.. Cotranslationally removes the N-terminal methionine from nascent proteins. The N-terminal methionine is often cleaved when the second residue in the primary sequence is small and uncharged (Met-Ala-, Cys, Gly, Pro, Ser, Thr, or Val). The chain is Methionine aminopeptidase 2-1 from Talaromyces marneffei (strain ATCC 18224 / CBS 334.59 / QM 7333) (Penicillium marneffei).